The sequence spans 129 residues: Phosphoribosyl-AMP cyclohydrolase (129 aa).

D76 contacts Mg(2+). C77 lines the Zn(2+) pocket. 2 residues coordinate Mg(2+): D78 and D80. Zn(2+) is bound by residues C97 and C104.

The protein belongs to the PRA-CH family. Homodimer. The cofactor is Mg(2+). Zn(2+) is required as a cofactor.

Its subcellular location is the cytoplasm. It carries out the reaction 1-(5-phospho-beta-D-ribosyl)-5'-AMP + H2O = 1-(5-phospho-beta-D-ribosyl)-5-[(5-phospho-beta-D-ribosylamino)methylideneamino]imidazole-4-carboxamide. It functions in the pathway amino-acid biosynthesis; L-histidine biosynthesis; L-histidine from 5-phospho-alpha-D-ribose 1-diphosphate: step 3/9. In terms of biological role, catalyzes the hydrolysis of the adenine ring of phosphoribosyl-AMP. In Methylibium petroleiphilum (strain ATCC BAA-1232 / LMG 22953 / PM1), this protein is Phosphoribosyl-AMP cyclohydrolase.